The primary structure comprises 383 residues: Putative glutamate--cysteine ligase 2-2 (383 aa).

Belongs to the glutamate--cysteine ligase type 2 family. YbdK subfamily.

The catalysed reaction is L-cysteine + L-glutamate + ATP = gamma-L-glutamyl-L-cysteine + ADP + phosphate + H(+). In terms of biological role, ATP-dependent carboxylate-amine ligase which exhibits weak glutamate--cysteine ligase activity. The polypeptide is Putative glutamate--cysteine ligase 2-2 (Paenarthrobacter aurescens (strain TC1)).